The following is a 477-amino-acid chain: Protein DETOXIFICATION 5 (477 aa).

12 helical membrane-spanning segments follow: residues 38 to 58 (AAPMATVTVSQYLLPVISVMV), 72 to 92 (LATAFANVSGFGIMYGLVGAL), 113 to 133 (FSAIVSNVPIVVLISILWFYM), 146 to 166 (ISKVAGSYAVCLIPALLAQAV), 187 to 207 (AITTLLFHIPVCLILVYAFGL), 211 to 231 (GAALAIGLSYWFNVLILALYV), 263 to 283 (AAMTTIEWSLFELLILSSGLL), 292 to 312 (VLSICLTTSSLHCVIPMGIGA), 333 to 353 (AVFAGIFLWFLEATICSTLLF), 376 to 396 (LSSLLCLSFMVDGFSSVLDGV), 411 to 431 (VVAYYLLGAPVGFFLGFWGHM), and 436 to 456 (LWIGVIVGSTAQGIILAIVTA).

This sequence belongs to the multi antimicrobial extrusion (MATE) (TC 2.A.66.1) family.

It is found in the membrane. The chain is Protein DETOXIFICATION 5 from Arabidopsis thaliana (Mouse-ear cress).